A 1392-amino-acid chain; its full sequence is ABC transporter G family member 42 (1392 aa).

A compositionally biased stretch (polar residues) spans 1-18; sequence MTMSQTDGVEFASRNTNE. A disordered region spans residues 1-26; that stretch reads MTMSQTDGVEFASRNTNENGHDDDDQ. Positions 139 to 413 constitute an ABC transporter 1 domain; the sequence is SKLSRFMCSN…FEDCGFKCPN (275 aa). Residue 173 to 180 coordinates ATP; the sequence is GPPSCGKT. In terms of domain architecture, ABC transmembrane type-2 1 spans 491–703; sequence DMLKACSRRE…AEIGLTANEF (213 aa). The next 6 membrane-spanning stretches (helical) occupy residues 509 to 529, 543 to 563, 596 to 616, 627 to 647, 652 to 672, and 739 to 759; these read FVYVFKSGLLIFIGFIAMTVY, YLMGSLFFSLFKLLADGLPEL, IPISFLESFLWTMLTYYVIGY, FLILFALHLSCISMFRAIAAV, VVATTVGSISIVLLSVFGGFI, and FGALIGFTLFFNTVFALALTF. An ABC transporter 2 domain is found at 800–1045; the sequence is FTFQDVQYII…VIEYFMRIHG (246 aa). 837 to 844 serves as a coordination point for ATP; that stretch reads GVSGAGKT. One can recognise an ABC transmembrane type-2 2 domain in the interval 1117-1331; that stretch reads EQFKACLWKQ…VLNGLLTSQY (215 aa). Transmembrane regions (helical) follow at residues 1136–1156, 1175–1195, 1215–1237, 1255–1275, 1281–1301, 1309–1329, and 1364–1384; these read YNLTRIIFMSFTCMLCGILFW, MFTVVLFSGINNCSTVLFSVA, YSLAQVLVEIPYSLFQSIVYVII, FYSIFCTLLIFNYFGMLLVVV, IAFTLRSSFYAIVNLFAGYVM, WWIWMYYLSPTSWVLNGLLTS, and LVAVVLIAFPILLASLFAFFI.

It belongs to the ABC transporter superfamily. ABCG family. PDR (TC 3.A.1.205) subfamily. Confined to shoots.

Its subcellular location is the membrane. May be a general defense protein. The sequence is that of ABC transporter G family member 42 (ABCG42) from Arabidopsis thaliana (Mouse-ear cress).